A 1284-amino-acid chain; its full sequence is Neurexin-4 (1284 aa).

A signal peptide spans M1 to A35. Residues D36–S1217 lie on the Extracellular side of the membrane. Positions C47–C185 constitute an F5/8 type C domain. C47 and C185 form a disulfide bridge. N195, N329, N340, and N398 each carry an N-linked (GlcNAc...) asparagine glycan. The Laminin G-like 1 domain maps to F220–C369. A disulfide bond links C333 and C369. Residues F403–C540 enclose the Laminin G-like 2 domain. Intrachain disulfides connect C507/C540, C546/C557, C551/C566, and C568/C578. In terms of domain architecture, EGF-like 1 spans M542–H579. N668 carries N-linked (GlcNAc...) asparagine glycosylation. A Laminin G-like 3 domain is found at F824–C962. 4 disulfide bridges follow: C934/C962, C966/C977, C971/C986, and C988/C998. In terms of domain architecture, EGF-like 2 spans C962 to A999. N974 carries N-linked (GlcNAc...) asparagine glycosylation. A Laminin G-like 4 domain is found at F1032–C1183. N-linked (GlcNAc...) asparagine glycans are attached at residues N1047 and N1137. A disulfide bond links C1147 and C1183. A helical transmembrane segment spans residues V1218–I1238. Topologically, residues G1239–I1284 are cytoplasmic.

Belongs to the neurexin family. Forms a complex with Nrg and Cont. Forms a complex composed of septa junction proteins Nrx-IV/Nrx, Tsf2/MTf, Cont and Nrg during late embryogenesis. The C-terminal region interacts with coracle. Interacts with Patj in cis form. Found in septate junctions of epithelial and glial cells.

The protein resides in the cell membrane. The protein localises to the cell junction. It is found in the septate junction. Its function is as follows. Seems to play a role in the formation and function of septate junctions. Septate junctions, which are the equivalent of vertebrates tight junctions, are characterized by regular arrays of transverse structures that span the intermembrane space and form a physical barrier to diffusion. Required for the blood-brain barrier formation. The polypeptide is Neurexin-4 (Nrx-IV) (Drosophila melanogaster (Fruit fly)).